We begin with the raw amino-acid sequence, 420 residues long: Tyrosine--tRNA ligase (420 aa).

L-tyrosine is bound at residue tyrosine 36. Positions 41–50 (PTADSLHIGH) match the 'HIGH' region motif. Residues tyrosine 170 and glutamine 174 each contribute to the L-tyrosine site. The 'KMSKS' region signature appears at 231–235 (KFGKS). Lysine 234 provides a ligand contact to ATP. Residues 353–420 (SNIIDVLIET…KKKYFMVNYK (68 aa)) form the S4 RNA-binding domain.

It belongs to the class-I aminoacyl-tRNA synthetase family. TyrS type 1 subfamily. As to quaternary structure, homodimer.

It localises to the cytoplasm. The catalysed reaction is tRNA(Tyr) + L-tyrosine + ATP = L-tyrosyl-tRNA(Tyr) + AMP + diphosphate + H(+). Functionally, catalyzes the attachment of tyrosine to tRNA(Tyr) in a two-step reaction: tyrosine is first activated by ATP to form Tyr-AMP and then transferred to the acceptor end of tRNA(Tyr). The protein is Tyrosine--tRNA ligase of Staphylococcus haemolyticus (strain JCSC1435).